A 393-amino-acid chain; its full sequence is 4-hydroxyphenylpyruvate dioxygenase (393 aa).

Thr2 is subject to N-acetylthreonine. VOC domains are found at residues 18-149 (HFHS…LVEK) and 180-338 (IIDH…IFTK). Residue Lys132 is modified to N6-succinyllysine. A Fe cation-binding site is contributed by His183. A phosphoserine mark is found at Ser211, Ser226, and Ser250. His266 and Glu349 together coordinate Fe cation.

This sequence belongs to the 4HPPD family. Homodimer. The cofactor is Fe cation.

It localises to the cytoplasm. The protein localises to the endoplasmic reticulum membrane. It is found in the golgi apparatus membrane. It catalyses the reaction 3-(4-hydroxyphenyl)pyruvate + O2 = homogentisate + CO2. It functions in the pathway amino-acid degradation; L-phenylalanine degradation; acetoacetate and fumarate from L-phenylalanine: step 3/6. Catalyzes the conversion of 4-hydroxyphenylpyruvic acid to homogentisic acid, one of the steps in tyrosine catabolism. The sequence is that of 4-hydroxyphenylpyruvate dioxygenase (Hpd) from Mus musculus (Mouse).